The following is a 345-amino-acid chain: Phosphoribosylformylglycinamidine cyclo-ligase (345 aa).

Belongs to the AIR synthase family.

Its subcellular location is the cytoplasm. It catalyses the reaction 2-formamido-N(1)-(5-O-phospho-beta-D-ribosyl)acetamidine + ATP = 5-amino-1-(5-phospho-beta-D-ribosyl)imidazole + ADP + phosphate + H(+). It functions in the pathway purine metabolism; IMP biosynthesis via de novo pathway; 5-amino-1-(5-phospho-D-ribosyl)imidazole from N(2)-formyl-N(1)-(5-phospho-D-ribosyl)glycinamide: step 2/2. The protein is Phosphoribosylformylglycinamidine cyclo-ligase of Salmonella typhimurium (strain LT2 / SGSC1412 / ATCC 700720).